Consider the following 195-residue polypeptide: Thymidine kinase (195 aa).

Residues 15–22 (GSMFSGKS) and 88–91 (DEVQ) contribute to the ATP site. E89 functions as the Proton acceptor in the catalytic mechanism. Zn(2+) is bound by residues C145, C148, C183, and C186.

Belongs to the thymidine kinase family. As to quaternary structure, homotetramer.

The protein localises to the cytoplasm. The catalysed reaction is thymidine + ATP = dTMP + ADP + H(+). This is Thymidine kinase from Bacillus cereus (strain 03BB102).